A 160-amino-acid chain; its full sequence is Protein-export protein SecB (160 aa).

Belongs to the SecB family. As to quaternary structure, homotetramer, a dimer of dimers. One homotetramer interacts with 1 SecA dimer.

It is found in the cytoplasm. In terms of biological role, one of the proteins required for the normal export of preproteins out of the cell cytoplasm. It is a molecular chaperone that binds to a subset of precursor proteins, maintaining them in a translocation-competent state. It also specifically binds to its receptor SecA. This is Protein-export protein SecB from Rhizobium johnstonii (strain DSM 114642 / LMG 32736 / 3841) (Rhizobium leguminosarum bv. viciae).